The chain runs to 454 residues: Mannosylfructose-phosphate synthase (454 aa).

It belongs to the glycosyltransferase 1 family. Mg(2+) is required as a cofactor. Requires Mn(2+) as cofactor.

It catalyses the reaction beta-D-fructose 6-phosphate + GDP-alpha-D-mannose = beta-D-fructofuranosyl alpha-D-mannopyranoside 6(F)-phosphate + GDP + H(+). It participates in carbohydrate metabolism; mannosylfructose biosynthesis; beta-D-fructofuranosyl alpha-D-mannopyranoside from D-fructose 6-phosphate and GDP-alpha-D-mannose: step 1/2. The sequence is that of Mannosylfructose-phosphate synthase from Agrobacterium fabrum (strain C58 / ATCC 33970) (Agrobacterium tumefaciens (strain C58)).